Reading from the N-terminus, the 2223-residue chain is Protein Ycf2 (2223 aa).

1576–1583 (GSIGTGRS) contributes to the ATP binding site.

The protein belongs to the Ycf2 family.

It localises to the plastid. Its subcellular location is the chloroplast stroma. Functionally, probable ATPase of unknown function. Its presence in a non-photosynthetic plant (Epifagus virginiana) and experiments in tobacco indicate that it has an essential function which is probably not related to photosynthesis. The chain is Protein Ycf2 from Silene latifolia (White campion).